The sequence spans 314 residues: Methionyl-tRNA formyltransferase (314 aa).

(6S)-5,6,7,8-tetrahydrofolate is bound at residue 113 to 116 (SLLP).

This sequence belongs to the Fmt family.

It catalyses the reaction L-methionyl-tRNA(fMet) + (6R)-10-formyltetrahydrofolate = N-formyl-L-methionyl-tRNA(fMet) + (6S)-5,6,7,8-tetrahydrofolate + H(+). Attaches a formyl group to the free amino group of methionyl-tRNA(fMet). The formyl group appears to play a dual role in the initiator identity of N-formylmethionyl-tRNA by promoting its recognition by IF2 and preventing the misappropriation of this tRNA by the elongation apparatus. This Pseudomonas syringae pv. syringae (strain B728a) protein is Methionyl-tRNA formyltransferase.